The primary structure comprises 38 residues: Toxin Bcg III 31.16 (38 aa).

Disulfide bonds link C4–C37, C6–C30, and C20–C38.

The protein belongs to the sea anemone type 3 (BDS) potassium channel toxin family.

It is found in the secreted. It localises to the nematocyst. In terms of biological role, possible modulator of crustacean voltage-gated sodium channels (Nav). This is Toxin Bcg III 31.16 from Bunodosoma cangicum (Sea anemone).